The chain runs to 353 residues: MAAPAQQTTQPGGGKRKGKAQYVLAKRARRCDAGGPRQLEPGLQGILITCNMNERKCVEEAYSLLNEYGDDMYGPEKFTDKDQQPSGSEGEDDDAEAALKKEVGDIKASTEMRLRRFQSVESGANNVVFIRTLGIEPEKLVHHILQDMYKTKKKKTRVILRMLPISGTCKAFLEDMKKYAETFLEPWFKAPNKGTFQIVYKSRNNSHVNREEVIRELAGIVCTLNSENKVDLTNPQYTVVVEIIKAVCCLSVVKDYMLFRKYNLQEVVKSPKDPSQLNSKQGNGKEAKLESADKSDQNNTAEGKNNQQVPENTEELGQTKPTSNPQVVNEGGAKPELASQATEGSKSNENDFS.

Polar residues predominate over residues 1–10 (MAAPAQQTTQ). Disordered stretches follow at residues 1-20 (MAAP…KGKA) and 73-96 (YGPE…DDAE). Ala-2 carries the N-acetylalanine modification. A Phosphothreonine modification is found at Thr-79. Ser-86, Ser-88, and Ser-119 each carry phosphoserine. In terms of domain architecture, THUMP spans 147–254 (DMYKTKKKKT…KAVCCLSVVK (108 aa)). Ser-270 is subject to Phosphoserine. The disordered stretch occupies residues 270–353 (SPKDPSQLNS…GSKSNENDFS (84 aa)). Positions 273–282 (DPSQLNSKQG) are enriched in polar residues. Residues 283 to 296 (NGKEAKLESADKSD) show a composition bias toward basic and acidic residues. The segment covering 297–327 (QNNTAEGKNNQQVPENTEELGQTKPTSNPQV) has biased composition (polar residues).

Belongs to the THUMPD1 family. In terms of assembly, interacts with NAT10. Binds tRNA.

Functions as a tRNA-binding adapter to mediate NAT10-dependent tRNA acetylation modifying cytidine to N4-acetylcytidine (ac4C). This chain is THUMP domain-containing protein 1 (THUMPD1), found in Homo sapiens (Human).